The following is a 262-amino-acid chain: MKTWLFFTFLFSCSSFYASCRYAEVRSIHEVAGDILYDEENFWLILDLDDTLLQGGEALSHSIWKSKAIQGLQKQGTPEQEAWEAVVPFWIEIQEMGTVQPIESAIFLLIEKIQKQGKTTFVYTERPKTAKDLTLKQLHMLNVSLEDTAPQPQAPLPKNLLYTSGILFSGDYHKGPGLDLFLEICTPLPAKIIYIDNQKENVLRIGDLCQKYGIAYFGITYKAQELHPPIYFDNIAQVQYNYSKKLLSNEAAALLLRHQMHE.

The N-terminal stretch at methionine 1–tyrosine 17 is a signal peptide.

The protein resides in the cell outer membrane. In Chlamydia pneumoniae (Chlamydophila pneumoniae), this protein is Putative outer membrane protein CPn_1034/CP_0818/CPj1034/CpB1074.